The chain runs to 229 residues: Large ribosomal subunit protein uL1 (229 aa).

Part of the 50S ribosomal subunit.

Its function is as follows. Directly binds to 23S rRNA. Forms what is known as the L1 stalk, which protrudes beyond the 70S ribosome surface. The stalk is preferentially stabilized in 70S versus 50S crystals. Interacts with the E site tRNA, blocking the exit path. This blockage implies that this section of the ribosome must be able to move to release the deacetylated tRNA. Protein L1 is also a translational repressor protein, it controls the translation of the L11 operon by binding to its mRNA. The chain is Large ribosomal subunit protein uL1 (rplA) from Thermus thermophilus (strain ATCC 27634 / DSM 579 / HB8).